Consider the following 121-residue polypeptide: NADPH-dependent 7-cyano-7-deazaguanine reductase (121 aa).

Residue cysteine 36 is the Thioimide intermediate of the active site. Aspartate 43 acts as the Proton donor in catalysis. Substrate is bound by residues 58–60 (VEL) and 77–78 (YE).

It belongs to the GTP cyclohydrolase I family. QueF type 1 subfamily.

The protein localises to the cytoplasm. It carries out the reaction 7-aminomethyl-7-carbaguanine + 2 NADP(+) = 7-cyano-7-deazaguanine + 2 NADPH + 3 H(+). It functions in the pathway tRNA modification; tRNA-queuosine biosynthesis. Functionally, catalyzes the NADPH-dependent reduction of 7-cyano-7-deazaguanine (preQ0) to 7-aminomethyl-7-deazaguanine (preQ1). This chain is NADPH-dependent 7-cyano-7-deazaguanine reductase, found in Rhodopirellula baltica (strain DSM 10527 / NCIMB 13988 / SH1).